Reading from the N-terminus, the 134-residue chain is uncharacterized protein (134 aa).

Positions 1–26 (MRLYKAMALCLPLVVICTSEVSQSTA) are cleaved as a signal peptide. Residues 77–98 (GEKNEEVAGPVDGEGSEEEAFD) are disordered.

This is an uncharacterized protein from Encephalitozoon cuniculi (strain GB-M1) (Microsporidian parasite).